A 201-amino-acid polypeptide reads, in one-letter code: L(+)-tartrate dehydratase subunit beta (201 aa).

His37 is a catalytic residue.

Belongs to the class-I fumarase family. As to quaternary structure, heterotetramer of two alpha and two beta subunits.

It carries out the reaction (2R,3R)-tartrate = oxaloacetate + H2O. The protein is L(+)-tartrate dehydratase subunit beta (ttdB) of Escherichia coli O6:K15:H31 (strain 536 / UPEC).